Consider the following 96-residue polypeptide: Co-chaperonin GroES (96 aa).

The protein belongs to the GroES chaperonin family. As to quaternary structure, heptamer of 7 subunits arranged in a ring. Interacts with the chaperonin GroEL.

The protein resides in the cytoplasm. Its function is as follows. Together with the chaperonin GroEL, plays an essential role in assisting protein folding. The GroEL-GroES system forms a nano-cage that allows encapsulation of the non-native substrate proteins and provides a physical environment optimized to promote and accelerate protein folding. GroES binds to the apical surface of the GroEL ring, thereby capping the opening of the GroEL channel. The sequence is that of Co-chaperonin GroES from Methylibium petroleiphilum (strain ATCC BAA-1232 / LMG 22953 / PM1).